Consider the following 341-residue polypeptide: Glyceraldehyde-3-phosphate dehydrogenase 2 (341 aa).

Residues 12–13, R78, and T120 each bind NAD(+); that span reads RI. D-glyceraldehyde 3-phosphate contacts are provided by residues 152–154 and T183; that span reads SCT. The active-site Nucleophile is C153. An NAD(+)-binding site is contributed by N184. D-glyceraldehyde 3-phosphate-binding positions include R198, 211–212, and R234; that span reads TG. Residue N313 participates in NAD(+) binding.

Belongs to the glyceraldehyde-3-phosphate dehydrogenase family. As to quaternary structure, homotetramer.

The protein resides in the cytoplasm. The enzyme catalyses D-glyceraldehyde 3-phosphate + phosphate + NAD(+) = (2R)-3-phospho-glyceroyl phosphate + NADH + H(+). It functions in the pathway carbohydrate degradation; glycolysis; pyruvate from D-glyceraldehyde 3-phosphate: step 1/5. Catalyzes the oxidative phosphorylation of glyceraldehyde 3-phosphate (G3P) to 1,3-bisphosphoglycerate (BPG) using the cofactor NAD. The first reaction step involves the formation of a hemiacetal intermediate between G3P and a cysteine residue, and this hemiacetal intermediate is then oxidized to a thioester, with concomitant reduction of NAD to NADH. The reduced NADH is then exchanged with the second NAD, and the thioester is attacked by a nucleophilic inorganic phosphate to produce BPG. The sequence is that of Glyceraldehyde-3-phosphate dehydrogenase 2 (gapA2) from Staphylococcus epidermidis (strain ATCC 12228 / FDA PCI 1200).